The sequence spans 85 residues: U4-theraphotoxin-Hhn1ad (85 aa).

The N-terminal stretch at 1–22 (MKVTLIAILTCAAVLVLHTTAA) is a signal peptide. Residues 23–48 (EELKTESQLMEVGMPDTELATVDEER) constitute a propeptide that is removed on maturation. 3 disulfide bridges follow: Cys52–Cys66, Cys56–Cys77, and Cys71–Cys82.

This sequence belongs to the neurotoxin 12 (Hwtx-2) family. 02 (Hwtx-2) subfamily. As to expression, expressed by the venom gland.

The protein resides in the secreted. Functionally, postsynaptic neurotoxin. The chain is U4-theraphotoxin-Hhn1ad from Cyriopagopus hainanus (Chinese bird spider).